Consider the following 359-residue polypeptide: Insulin gene enhancer protein isl-2a (359 aa).

2 consecutive LIM zinc-binding domains span residues 27-80 (CVGC…CKRD) and 30-143 (CGSQ…RADH). The disordered stretch occupies residues 171-190 (EPVPVRQPPHRNHVHKQSEK). Positions 191 to 250 (TTRVRTVLNEKQLHTLRTCYNANPRPDALMKEQLVEMTGLSPRVIRVWFQNKRCKDKKKS) form a DNA-binding region, homeobox. Residues 326–336 (ESGSLGNSSGS) are compositionally biased toward low complexity. Residues 326-359 (ESGSLGNSSGSDVTSLSSQLPDTPNSMVPSPVET) form a disordered region. Residues 337-359 (DVTSLSSQLPDTPNSMVPSPVET) show a composition bias toward polar residues.

It is found in the nucleus. In terms of biological role, binds to one of the cis-acting domain of the insulin gene enhancer. May be involved in subtype specialization of primary motoneurons. This Danio rerio (Zebrafish) protein is Insulin gene enhancer protein isl-2a (isl2a).